Consider the following 578-residue polypeptide: Proline--tRNA ligase (578 aa).

Belongs to the class-II aminoacyl-tRNA synthetase family. ProS type 1 subfamily. In terms of assembly, homodimer.

The protein localises to the cytoplasm. It catalyses the reaction tRNA(Pro) + L-proline + ATP = L-prolyl-tRNA(Pro) + AMP + diphosphate. Catalyzes the attachment of proline to tRNA(Pro) in a two-step reaction: proline is first activated by ATP to form Pro-AMP and then transferred to the acceptor end of tRNA(Pro). As ProRS can inadvertently accommodate and process non-cognate amino acids such as alanine and cysteine, to avoid such errors it has two additional distinct editing activities against alanine. One activity is designated as 'pretransfer' editing and involves the tRNA(Pro)-independent hydrolysis of activated Ala-AMP. The other activity is designated 'posttransfer' editing and involves deacylation of mischarged Ala-tRNA(Pro). The misacylated Cys-tRNA(Pro) is not edited by ProRS. This chain is Proline--tRNA ligase, found in Burkholderia vietnamiensis (strain G4 / LMG 22486) (Burkholderia cepacia (strain R1808)).